A 185-amino-acid polypeptide reads, in one-letter code: MGYPGKNHKSYQTPKRPFEKTRIEEETRLVIEYGLRNKREVWKAQSHLRKYRKAARELLALMSSATNQTVFEAKKSELISHMQRAGLLGPDADIDNVLALKVPAQLERRLQTLVYRKGLARSPKQARQLVTHGHIAIGGRRVTVPGYLVTRGEETTISYAGKSPFVDASHAERTRITRPTGAGVN.

One can recognise an S4 RNA-binding domain in the interval R108–H170.

The protein belongs to the universal ribosomal protein uS4 family. As to quaternary structure, part of the 30S ribosomal subunit. Contacts protein S5. The interaction surface between S4 and S5 is involved in control of translational fidelity.

In terms of biological role, one of the primary rRNA binding proteins, it binds directly to 16S rRNA where it nucleates assembly of the body of the 30S subunit. Functionally, with S5 and S12 plays an important role in translational accuracy. The sequence is that of Small ribosomal subunit protein uS4 from Methanoregula boonei (strain DSM 21154 / JCM 14090 / 6A8).